The primary structure comprises 261 residues: Ribosomal RNA small subunit methyltransferase A (261 aa).

Residues Asn-20, Leu-22, Gly-47, Glu-68, Asp-90, and Asn-110 each contribute to the S-adenosyl-L-methionine site.

Belongs to the class I-like SAM-binding methyltransferase superfamily. rRNA adenine N(6)-methyltransferase family. RsmA subfamily.

The protein resides in the cytoplasm. It catalyses the reaction adenosine(1518)/adenosine(1519) in 16S rRNA + 4 S-adenosyl-L-methionine = N(6)-dimethyladenosine(1518)/N(6)-dimethyladenosine(1519) in 16S rRNA + 4 S-adenosyl-L-homocysteine + 4 H(+). Its function is as follows. Specifically dimethylates two adjacent adenosines (A1518 and A1519) in the loop of a conserved hairpin near the 3'-end of 16S rRNA in the 30S particle. May play a critical role in biogenesis of 30S subunits. This chain is Ribosomal RNA small subunit methyltransferase A, found in Prosthecochloris aestuarii (strain DSM 271 / SK 413).